Reading from the N-terminus, the 270-residue chain is LIM zinc-binding domain-containing Nebulette (270 aa).

The region spanning 3-63 (PQCARCGKVV…NAHYPKQSFT (61 aa)) is the LIM zinc-binding domain. A Nebulin 1 repeat occupies 61 to 95 (SFTTVADTPENLRLKQQSELQSQVKYKRDFEESKG). At Arg-96 the chain carries Omega-N-methylarginine. One copy of the Nebulin 2 repeat lies at 97 to 131 (GFSIVTDTPELQRLKRTQEQISNVKYHEDFEKTKG). The residue at position 132 (Arg-132) is an Omega-N-methylarginine. One copy of the Nebulin 3 repeat lies at 133 to 159 (GFTPVVDDPVTERVRKSTQVVSDAAYK). A Phosphothreonine modification is found at Thr-135. Residues 210–270 (AHLRTYRAMY…LPANYIEFVN (61 aa)) enclose the SH3 domain. At Ser-230 the chain carries Phosphoserine.

It is found in the cytoplasm. In terms of biological role, binds to actin and plays an important role in the assembly of the Z-disk. Isoform 2 might play a role in the assembly of focal adhesion. This chain is LIM zinc-binding domain-containing Nebulette (Nebl), found in Mus musculus (Mouse).